Reading from the N-terminus, the 347-residue chain is NADH-quinone oxidoreductase subunit H 1 (347 aa).

9 helical membrane passes run I13 to V33, P50 to F70, A82 to V102, V115 to G135, I161 to V181, F198 to L218, C263 to L283, V286 to V306, and L321 to L341.

Belongs to the complex I subunit 1 family. NDH-1 is composed of 14 different subunits. Subunits NuoA, H, J, K, L, M, N constitute the membrane sector of the complex.

Its subcellular location is the cell inner membrane. It carries out the reaction a quinone + NADH + 5 H(+)(in) = a quinol + NAD(+) + 4 H(+)(out). Its function is as follows. NDH-1 shuttles electrons from NADH, via FMN and iron-sulfur (Fe-S) centers, to quinones in the respiratory chain. The immediate electron acceptor for the enzyme in this species is believed to be ubiquinone. Couples the redox reaction to proton translocation (for every two electrons transferred, four hydrogen ions are translocated across the cytoplasmic membrane), and thus conserves the redox energy in a proton gradient. This subunit may bind ubiquinone. The sequence is that of NADH-quinone oxidoreductase subunit H 1 from Rhizobium etli (strain ATCC 51251 / DSM 11541 / JCM 21823 / NBRC 15573 / CFN 42).